The sequence spans 565 residues: NAD-dependent malic enzyme (565 aa).

Tyr-104 functions as the Proton donor in the catalytic mechanism. Arg-157 lines the NAD(+) pocket. Lys-175 acts as the Proton acceptor in catalysis. A divalent metal cation is bound by residues Glu-246, Asp-247, and Asp-270. Residues Asp-270 and Asn-418 each contribute to the NAD(+) site.

It belongs to the malic enzymes family. Homotetramer. Mg(2+) is required as a cofactor. Requires Mn(2+) as cofactor.

The enzyme catalyses (S)-malate + NAD(+) = pyruvate + CO2 + NADH. The catalysed reaction is oxaloacetate + H(+) = pyruvate + CO2. The polypeptide is NAD-dependent malic enzyme (Salmonella dublin (strain CT_02021853)).